A 321-amino-acid polypeptide reads, in one-letter code: L-Ala-D/L-Glu epimerase (321 aa).

Residues Thr-124 and Lys-149 each coordinate substrate. Catalysis depends on Lys-151, which acts as the Proton acceptor; specific for (R)-substrate epimerization. 3 residues coordinate Mg(2+): Asp-176, Glu-202, and Asp-225. Lys-247 acts as the Proton acceptor; specific for (S)-substrate epimerization in catalysis. Residues Cys-275, Asp-297, and Asp-299 each contribute to the substrate site.

It belongs to the mandelate racemase/muconate lactonizing enzyme family. As to quaternary structure, monomer. The cofactor is Mg(2+).

The enzyme catalyses L-alanyl-L-glutamate = L-alanyl-D-glutamate. It functions in the pathway cell wall biogenesis; peptidoglycan recycling. Catalyzes the epimerization of L-Ala-D-Glu to L-Ala-L-Glu and has a role in the recycling of the murein peptide, of which L-Ala-D-Glu is a component. Is also able to catalyze the reverse reaction and the epimerization of all the L-Ala-X dipeptides, except L-Ala-L-Arg, L-Ala-L-Lys and L-Ala-L-Pro. Is also active with L-Gly-L-Glu, L-Phe-L-Glu, and L-Ser-L-Glu, but not with L-Glu-L-Glu, L-Lys-L-Glu, L-Pro-L-Glu, L-Lys-L-Ala, or D-Ala-D-Ala. The sequence is that of L-Ala-D/L-Glu epimerase (ycjG) from Escherichia coli (strain K12).